The following is a 186-amino-acid chain: MYSYIKGKVVNNGQNFVIVDNNNIGYHIIVSNPYFYEINKEYKFFVHFHIKENLQILYGFNDNKNLLFFKKLLDVPTIGPKSALMLSETDNLEQVFQAIENNDNVYLRKFPGIGIKSAQQIILKLKGDLIFSEKIILNPKKTELEKILLNLGFVKKEIKSVLNQIDDKKELELMLKEVLLKLAKNI.

The tract at residues 1-61 (MYSYIKGKVV…ENLQILYGFN (61 aa)) is domain I. Residues 62–134 (DNKNLLFFKK…LKGDLIFSEK (73 aa)) form a domain II region. Positions 134 to 135 (KI) are flexible linker. The domain III stretch occupies residues 136 to 186 (ILNPKKTELEKILLNLGFVKKEIKSVLNQIDDKKELELMLKEVLLKLAKNI).

This sequence belongs to the RuvA family. In terms of assembly, homotetramer. Forms an RuvA(8)-RuvB(12)-Holliday junction (HJ) complex. HJ DNA is sandwiched between 2 RuvA tetramers; dsDNA enters through RuvA and exits via RuvB. An RuvB hexamer assembles on each DNA strand where it exits the tetramer. Each RuvB hexamer is contacted by two RuvA subunits (via domain III) on 2 adjacent RuvB subunits; this complex drives branch migration. In the full resolvosome a probable DNA-RuvA(4)-RuvB(12)-RuvC(2) complex forms which resolves the HJ.

The protein resides in the cytoplasm. Its function is as follows. The RuvA-RuvB-RuvC complex processes Holliday junction (HJ) DNA during genetic recombination and DNA repair, while the RuvA-RuvB complex plays an important role in the rescue of blocked DNA replication forks via replication fork reversal (RFR). RuvA specifically binds to HJ cruciform DNA, conferring on it an open structure. The RuvB hexamer acts as an ATP-dependent pump, pulling dsDNA into and through the RuvAB complex. HJ branch migration allows RuvC to scan DNA until it finds its consensus sequence, where it cleaves and resolves the cruciform DNA. This chain is Holliday junction branch migration complex subunit RuvA, found in Phytoplasma mali (strain AT).